The sequence spans 205 residues: Transcriptional regulator GfcR (205 aa).

It belongs to the purine/pyrimidine phosphoribosyltransferase family. GfcR subfamily.

The protein is Transcriptional regulator GfcR of Methanococcus maripaludis (strain C7 / ATCC BAA-1331).